We begin with the raw amino-acid sequence, 380 residues long: MLQTLYDYFWWERLWLPVNLTWADLEDKDGRVYAKASDLYITLPLALLFLVIRYFFELYVATPLAALLNVKEKTRLRAPPNATLEHFYQTSGKQPKQVEVDLLSRQSGLSGRQVERWFRRRRNQDRPSLLKKFREASWRFTYYLIAFVAGMAVTVDKPWFYDLRKVWEGYPIQSIIPSQYWYYMIELSFYWSLLFSIASDVKRKDFKEQIIHHVATIILLCFSWFANYVRAGTLIMALHDASDYLLESAKMFNYAGWKNTCNNLFIVFAIVFIITRLVIMPFWILHCTMIYPLELYPAFFGYYFFNFMMAVLQMLHIFWAYFILRMAHKFITGKLIEDERSDREETESSEGEETAAGAGAKSRLLANGHPILNNNHPKND.

Residues 1–40 (MLQTLYDYFWWERLWLPVNLTWADLEDKDGRVYAKASDLY) are Lumenal-facing. A glycan (N-linked (GlcNAc...) asparagine) is linked at asparagine 19. A helical membrane pass occupies residues 41–61 (ITLPLALLFLVIRYFFELYVA). Residues 67 to 128 (LLNVKEKTRL…RRRRNQDRPS (62 aa)) form a homeobox-like region. The 202-residue stretch at 131 to 332 (KKFREASWRF…ILRMAHKFIT (202 aa)) folds into the TLC domain. Transmembrane regions (helical) follow at residues 140 to 160 (FTYY…KPWF), 175 to 195 (IIPS…SLLF), 209 to 229 (QIIH…ANYV), and 264 to 284 (LFIV…PFWI). Residues 291-300 (YPLELYPAFF) carry the Last loop motif motif. The chain crosses the membrane as a helical span at residues 304-324 (FFNFMMAVLQMLHIFWAYFIL). Residues 325–380 (RMAHKFITGKLIEDERSDREETESSEGEETAAGAGAKSRLLANGHPILNNNHPKND) lie on the Cytoplasmic side of the membrane. The segment at 340–380 (RSDREETESSEGEETAAGAGAKSRLLANGHPILNNNHPKND) is disordered. Serine 341 is subject to Phosphoserine. Over residues 344–353 (EETESSEGEE) the composition is skewed to acidic residues. A Phosphothreonine modification is found at threonine 346. Residues serine 348 and serine 349 each carry the phosphoserine modification.

Interacts with ATP6V0C, ASGR1, ASGR2 and SLC22A1/OCT1. Interacts with ELOV1, HSD17B12 and TECR. Interacts with NDUFS2. Interacts with PAQR4; the interaction regulates the stability and activity of CERS2 and is inhibited in presence of ceramides. Post-translationally, acetylated. Deacetylation by SIRT3 increases enzyme activity and promotes mitochondrial ceramide accumulation. Phosphorylated at the C-terminus by CK2, leading to increase the ceramide synthase activity. In terms of tissue distribution, broadly expressed, with highest levels in liver and kidney. In brain is detected in neurons, oligodentrocytes, ependymal cells and epithelial cells of the choroid plexus. In kidney is detected in collecting ducts and to a lesser degree in proximal tubules.

The protein localises to the endoplasmic reticulum membrane. It carries out the reaction a very long-chain fatty acyl-CoA + a sphingoid base = an N-(very-long-chain fatty acyl)-sphingoid base + CoA + H(+). The enzyme catalyses docosanoyl-CoA + sphinganine = N-docosanoylsphinganine + CoA + H(+). It catalyses the reaction tetracosanoyl-CoA + sphinganine = N-tetracosanoylsphinganine + CoA + H(+). The catalysed reaction is hexacosanoyl-CoA + sphinganine = N-hexacosanoylsphinganine + CoA + H(+). It carries out the reaction (15Z)-tetracosenoyl-CoA + sphinganine = N-(15Z-tetracosenoyl)-sphinganine + CoA + H(+). The enzyme catalyses 2-hydroxytetracosanoyl-CoA + sphinganine = N-(2-hydroxytetracosanoyl)-sphinganine + CoA + H(+). It catalyses the reaction 2-hydroxydocosanoyl-CoA + sphinganine = N-(2-hydroxydocosanoyl)-sphinganine + CoA + H(+). The catalysed reaction is 2-hydroxytetracosenoyl-CoA + sphinganine = N-(2-hydroxytetracosenoyl)-sphinganine + CoA + H(+). It carries out the reaction tetracosenoyl-CoA + sphinganine = an N-tetracosenoylsphinganine + CoA + H(+). The enzyme catalyses hexacosenoyl-CoA + sphinganine = N-hexacosenoylsphinganine + CoA + H(+). It catalyses the reaction tetracosanoyl-CoA + sphing-4-enine = N-tetracosanoyl-sphing-4-enine + CoA + H(+). The catalysed reaction is tetracosenoyl-CoA + sphing-4-enine = N-(tetracosenoyl)-sphing-4-enine + CoA + H(+). It carries out the reaction heptadecasphing-4-enine + tetracosanoyl-CoA = N-tetracosanoyl-heptadecasphing-4-enine + CoA + H(+). The enzyme catalyses a fatty acyl-CoA + sphing-4-enine = an N-acylsphing-4-enine + CoA + H(+). It catalyses the reaction sphing-4-enine + hexadecanoyl-CoA = N-hexadecanoylsphing-4-enine + CoA + H(+). The catalysed reaction is sphing-4-enine + octadecanoyl-CoA = N-octadecanoylsphing-4-enine + CoA + H(+). It carries out the reaction eicosanoyl-CoA + sphing-4-enine = N-eicosanoyl-sphing-4-enine + CoA + H(+). The enzyme catalyses sphinganine + hexadecanoyl-CoA = N-hexadecanoylsphinganine + CoA + H(+). It catalyses the reaction sphinganine + octadecanoyl-CoA = N-(octadecanoyl)-sphinganine + CoA + H(+). The catalysed reaction is sphinganine + (9Z)-octadecenoyl-CoA = N-(9Z-octadecenoyl)-sphinganine + CoA + H(+). It carries out the reaction eicosanoyl-CoA + sphinganine = N-eicosanoylsphinganine + CoA + H(+). The protein operates within lipid metabolism; sphingolipid metabolism. Ceramide synthase activity is inhibited by sphingosine-1-phosphate. Functionally, ceramide synthase that catalyzes the transfer of the acyl chain from acyl-CoA to a sphingoid base, with high selectivity toward very-long-chain fatty acyl-CoA (chain length C22-C27). N-acylates sphinganine and sphingosine bases to form dihydroceramides and ceramides in de novo synthesis and salvage pathways, respectively. Plays a non-redundant role in the synthesis of ceramides with very-long-chain fatty acids in kidney, liver and brain. Regulates the abundance of myelin-specific sphingolipids galactosylceramide and sulfatide that affects myelin sheath architecture and motor neuron functions. In Mus musculus (Mouse), this protein is Ceramide synthase 2.